Consider the following 247-residue polypeptide: Triosephosphate isomerase (247 aa).

Substrate contacts are provided by Asn10 and Lys12. The active-site Electrophile is His94. Catalysis depends on Glu164, which acts as the Proton acceptor.

The protein belongs to the triosephosphate isomerase family. As to quaternary structure, homodimer.

It catalyses the reaction D-glyceraldehyde 3-phosphate = dihydroxyacetone phosphate. The protein operates within carbohydrate biosynthesis; gluconeogenesis. Its pathway is carbohydrate degradation; glycolysis; D-glyceraldehyde 3-phosphate from glycerone phosphate: step 1/1. This chain is Triosephosphate isomerase (Tpi), found in Drosophila simulans (Fruit fly).